The primary structure comprises 217 residues: Pyridoxine/pyridoxamine 5'-phosphate oxidase (217 aa).

Residues arginine 13–tyrosine 16 and lysine 71 each bind substrate. FMN is bound by residues arginine 66–lysine 71, tyrosine 81–threonine 82, arginine 87, lysine 88, and glutamine 110. Positions 128, 132, and 136 each coordinate substrate. FMN contacts are provided by residues glutamine 145–serine 146 and tryptophan 190. Arginine 196–histidine 198 contacts substrate. Arginine 200 contributes to the FMN binding site.

It belongs to the pyridoxamine 5'-phosphate oxidase family. Homodimer. The cofactor is FMN.

It catalyses the reaction pyridoxamine 5'-phosphate + O2 + H2O = pyridoxal 5'-phosphate + H2O2 + NH4(+). The enzyme catalyses pyridoxine 5'-phosphate + O2 = pyridoxal 5'-phosphate + H2O2. Its pathway is cofactor metabolism; pyridoxal 5'-phosphate salvage; pyridoxal 5'-phosphate from pyridoxamine 5'-phosphate: step 1/1. The protein operates within cofactor metabolism; pyridoxal 5'-phosphate salvage; pyridoxal 5'-phosphate from pyridoxine 5'-phosphate: step 1/1. In terms of biological role, catalyzes the oxidation of either pyridoxine 5'-phosphate (PNP) or pyridoxamine 5'-phosphate (PMP) into pyridoxal 5'-phosphate (PLP). This chain is Pyridoxine/pyridoxamine 5'-phosphate oxidase, found in Yersinia enterocolitica serotype O:8 / biotype 1B (strain NCTC 13174 / 8081).